The primary structure comprises 393 residues: NAD(P)H-quinone oxidoreductase subunit H, chloroplastic (393 aa).

The protein belongs to the complex I 49 kDa subunit family. In terms of assembly, NDH is composed of at least 16 different subunits, 5 of which are encoded in the nucleus.

The protein resides in the plastid. It is found in the chloroplast thylakoid membrane. It carries out the reaction a plastoquinone + NADH + (n+1) H(+)(in) = a plastoquinol + NAD(+) + n H(+)(out). The enzyme catalyses a plastoquinone + NADPH + (n+1) H(+)(in) = a plastoquinol + NADP(+) + n H(+)(out). NDH shuttles electrons from NAD(P)H:plastoquinone, via FMN and iron-sulfur (Fe-S) centers, to quinones in the photosynthetic chain and possibly in a chloroplast respiratory chain. The immediate electron acceptor for the enzyme in this species is believed to be plastoquinone. Couples the redox reaction to proton translocation, and thus conserves the redox energy in a proton gradient. This chain is NAD(P)H-quinone oxidoreductase subunit H, chloroplastic, found in Nicotiana tomentosiformis (Tobacco).